A 206-amino-acid polypeptide reads, in one-letter code: Small ribosomal subunit protein uS5 (206 aa).

The disordered stretch occupies residues 1 to 42 (MENKTEVVVAENANNQTQPERKKFDRKPNRRPQGPKQFQKDD). An S5 DRBM domain is found at 43 to 106 (FEEKVVTIRR…KEAKKNLIRV (64 aa)).

This sequence belongs to the universal ribosomal protein uS5 family. As to quaternary structure, part of the 30S ribosomal subunit. Contacts proteins S4 and S8.

With S4 and S12 plays an important role in translational accuracy. Functionally, located at the back of the 30S subunit body where it stabilizes the conformation of the head with respect to the body. This is Small ribosomal subunit protein uS5 from Mesoplasma florum (strain ATCC 33453 / NBRC 100688 / NCTC 11704 / L1) (Acholeplasma florum).